Here is an 887-residue protein sequence, read N- to C-terminus: ATP-dependent DNA helicase srs2 (887 aa).

Positions 9–304 constitute a UvrD-like helicase ATP-binding domain; it reads KFLNEEQRIS…LHLERNYRSA (296 aa). Residues 33–38 and Arg302 each bind ATP; that span reads GSGKTR. Positions 305-597 constitute a UvrD-like helicase C-terminal domain; the sequence is KPILELALSI…TISTLHAAKG (293 aa).

This sequence belongs to the helicase family. UvrD subfamily.

The protein localises to the nucleus. The enzyme catalyses Couples ATP hydrolysis with the unwinding of duplex DNA by translocating in the 3'-5' direction.. It catalyses the reaction ATP + H2O = ADP + phosphate + H(+). Functionally, ATP-dependent DNA helicase involved in DNA repair at least for UV-induced lesions. Also aids the recombinational repair of camptothecin-induced collapsed replication forks. In Schizosaccharomyces pombe (strain 972 / ATCC 24843) (Fission yeast), this protein is ATP-dependent DNA helicase srs2 (srs2).